The sequence spans 144 residues: TSC22 domain family protein 1 (144 aa).

The segment at 77–98 (LKEQIKELIEKNSQLEQENNLL) is leucine-zipper. The tract at residues 109–144 (QFQAQLQTGSPPATTQPQGSTQPPAQPASQGSGPTA) is disordered.

Belongs to the TSC-22/Dip/Bun family. Forms homodimers. Forms a heterodimer with TSC22D4/THG1. Interacts with histone H1-2. Interacts with GNL3.

It localises to the cytoplasm. It is found in the nucleus. Its subcellular location is the mitochondrion. Transcriptional repressor. Plays a role in the repression of hematopoietic precursor cell growth. Promotes IL2 deprivation-induced apoptosis in T-lymphocytes, via repression of TSC22D3/GILZ transcription and activation of the caspase cascade. Positively regulates cell death in response to TGFB3 during mammary gland involution. The polypeptide is TSC22 domain family protein 1 (Bathyergus suillus (Cape dune mole rat)).